The following is a 205-amino-acid chain: Glycerol-3-phosphate acyltransferase (205 aa).

The next 5 helical transmembrane spans lie at 3-23 (VFAL…SAIL), 53-73 (GVAA…VWLA), 80-100 (PFYL…PVFF), 112-132 (LGAI…TWLL), and 138-158 (GYSS…VWWF).

Belongs to the PlsY family. As to quaternary structure, probably interacts with PlsX.

It is found in the cell inner membrane. The enzyme catalyses an acyl phosphate + sn-glycerol 3-phosphate = a 1-acyl-sn-glycero-3-phosphate + phosphate. It participates in lipid metabolism; phospholipid metabolism. Its function is as follows. Catalyzes the transfer of an acyl group from acyl-phosphate (acyl-PO(4)) to glycerol-3-phosphate (G3P) to form lysophosphatidic acid (LPA). This enzyme utilizes acyl-phosphate as fatty acyl donor, but not acyl-CoA or acyl-ACP. The polypeptide is Glycerol-3-phosphate acyltransferase (Erwinia tasmaniensis (strain DSM 17950 / CFBP 7177 / CIP 109463 / NCPPB 4357 / Et1/99)).